The following is a 591-amino-acid chain: Aspartate--tRNA(Asp/Asn) ligase (591 aa).

E174 contacts L-aspartate. Positions 198-201 (QLFK) are aspartate. R220 serves as a coordination point for L-aspartate. ATP contacts are provided by residues 220–222 (RDE) and Q229. Residue H450 coordinates L-aspartate. E483 serves as a coordination point for ATP. Residue R490 participates in L-aspartate binding. Position 535–538 (535–538 (GLDR)) interacts with ATP.

It belongs to the class-II aminoacyl-tRNA synthetase family. Type 1 subfamily. As to quaternary structure, homodimer.

The protein localises to the cytoplasm. The enzyme catalyses tRNA(Asx) + L-aspartate + ATP = L-aspartyl-tRNA(Asx) + AMP + diphosphate. Functionally, aspartyl-tRNA synthetase with relaxed tRNA specificity since it is able to aspartylate not only its cognate tRNA(Asp) but also tRNA(Asn). Reaction proceeds in two steps: L-aspartate is first activated by ATP to form Asp-AMP and then transferred to the acceptor end of tRNA(Asp/Asn). The chain is Aspartate--tRNA(Asp/Asn) ligase from Pseudomonas aeruginosa (strain LESB58).